The primary structure comprises 476 residues: FAD-dependent monooxygenase ausM (476 aa).

FAD contacts are provided by E41, G55, and R114. Residue Y222 is part of the active site. FAD contacts are provided by D314 and A327. Residues 447 to 467 (LGSTPIHMLTLLLPCLFYFMY) form a helical membrane-spanning segment.

This sequence belongs to the paxM FAD-dependent monooxygenase family. FAD is required as a cofactor.

Its subcellular location is the membrane. The protein operates within secondary metabolite biosynthesis; terpenoid biosynthesis. Its function is as follows. FAD-dependent monooxygenase; part of the gene cluster A that mediates the biosynthesis of the fungal meroterpenoid acetoxydehydroaustin. The first step of the pathway is the synthesis of 3,5-dimethylorsellinic acid by the polyketide synthase ausA. 3,5-dimethylorsellinic acid is then prenylated by the polyprenyl transferase ausN. Further epoxidation by the FAD-dependent monooxygenase ausM and cyclization by the probable terpene cyclase ausL lead to the formation of protoaustinoid A. Protoaustinoid A is then oxidized to spiro-lactone preaustinoid A3 by the combined action of the FAD-binding monooxygenases ausB and ausC, and the dioxygenase ausE. Acid-catalyzed keto-rearrangement and ring contraction of the tetraketide portion of preaustinoid A3 by ausJ lead to the formation of preaustinoid A4. The aldo-keto reductase ausK, with the help of ausH, is involved in the next step by transforming preaustinoid A4 into isoaustinone which is in turn hydroxylated by the P450 monooxygenase ausI to form austinolide. The cytochrome P450 monooxygenase ausG then modifies austinolide to austinol. Austinol is further acetylated to austin by the O-acetyltransferase ausP, which spontaneously changes to dehydroaustin. The cytochrome P450 monooxygenase then converts dehydroaustin is into 7-dehydrodehydroaustin. The hydroxylation catalyzed by ausR permits the second O-acetyltransferase ausQ to add an additional acetyl group to the molecule, leading to the formation of acetoxydehydroaustin. Due to genetic rearrangements of the clusters and the subsequent loss of some enzymes, the end product of the Penicillium brasilianum austinoid biosynthesis clusters is acetoxydehydroaustin. The sequence is that of FAD-dependent monooxygenase ausM from Penicillium brasilianum.